Consider the following 966-residue polypeptide: MSHDPMNPHLQSSADPSRSSEEIRQDFLQFFQAKGHEVVPSASLVPDGDGTLLFTNAGMNQFKDVFLGTGQRPYSRAVDTQKCLRVSGKHNDLEEVGHDTYHHTFFEMLGNWSFGDYFKAEAIRWAWELLVERWGLAPDRLYATVHEGDDDFGLSADAEAYDLWLSETPLPEERVLYEPSKENFWMMGDTGPCGPCSELHVDLRPPEARQETPGRELVNVDHPQVMELWNLVFIQYNAQTDGSLEPLDDQHVDTGMGFERMVAVLQGKESTYDTDLFAPLLQAMADRSPREEIRGYDDLHIEDDDEHEQVRIALRVVADHIRAIAFAISDGVMPSNEGRGYVIRRILRRAVRYGYQTLELEEPFLHRLVDPLIEKMGGPFDGLAEQQEFIEQAIRSEEESFLETLGTGIEFFERVVPHVTGFQDTDGEESDRLLGALREDAQAMDLLEKAYVDTDDENDILHSFARTARGGTLPGQIAFLLHDTYGFPIDLTRLMARERDLDVDMEGYETLMDRQQERARAASDFAVDQSDVQAWQSVSPGEASVFVGYDRAVVPDAEVRAVRVVETGDTQQYEVELSRTPFYAEAGGQVGDTGTLRFGDESVQVLDTQREGERIAHTVDTLPEPLDGPVEAAVDAERRNHIRAHHTATHLMHAVLRETLGDHVQQKGSLVAPDRLRFDFSHFDAVDEDTLRHIERRVNTAIQQNIPKQEARDVPIDEALDRGATALFDEQYGDRVRVITFDPDFSMELCGGTHVDATGEIGLFRFLSEGSVASGVRRVEAVAGKAALEHVESELETLTRARRQFRSLHTSLPEAIAEVQEERDRLAGEVDQLRRGQLSDQLDTFIAENAASVDGITVVTGRLDRASMDDLQELGQQFRDKLGEGAVGVLGSVGEDGEKAYVVATVADDLVDDGALRAGDLVGTLGDRLGGGGGGRPSLASAGGRDPEALDTVLDGVPALVRDRLE.

Residues His-646, His-650, Cys-750, and His-754 each coordinate Zn(2+). Residues 927–949 (DRLGGGGGGRPSLASAGGRDPEA) form a disordered region.

It belongs to the class-II aminoacyl-tRNA synthetase family. The cofactor is Zn(2+).

Its subcellular location is the cytoplasm. The catalysed reaction is tRNA(Ala) + L-alanine + ATP = L-alanyl-tRNA(Ala) + AMP + diphosphate. In terms of biological role, catalyzes the attachment of alanine to tRNA(Ala) in a two-step reaction: alanine is first activated by ATP to form Ala-AMP and then transferred to the acceptor end of tRNA(Ala). Also edits incorrectly charged Ser-tRNA(Ala) and Gly-tRNA(Ala) via its editing domain. This Salinibacter ruber (strain DSM 13855 / M31) protein is Alanine--tRNA ligase.